Here is a 457-residue protein sequence, read N- to C-terminus: 3-ketoacyl-CoA thiolase 5, peroxisomal (457 aa).

The transit peptide at 1-37 (MERAMERQKILLRHLNPVSSSNSSLKHEPSLLSPVNC) directs the protein to the peroxisome. The active-site Acyl-thioester intermediate is the Cys137. Catalysis depends on proton acceptor residues His394 and Cys426.

Belongs to the thiolase-like superfamily. Thiolase family. Homodimer. Expressed in seedlings and wounded leaves.

It localises to the peroxisome. The catalysed reaction is an acyl-CoA + acetyl-CoA = a 3-oxoacyl-CoA + CoA. Its pathway is lipid metabolism; fatty acid metabolism. In terms of biological role, probably involved in long chain fatty-acid beta-oxidation prior to gluconeogenesis during germination and subsequent seedling growth. Involved in systemic jasmonic acid (JA) biosynthesis after wounding and may be during senescence. This chain is 3-ketoacyl-CoA thiolase 5, peroxisomal (KAT5), found in Arabidopsis thaliana (Mouse-ear cress).